The sequence spans 351 residues: Prostaglandin reductase 2 (351 aa).

99 to 100 serves as a coordination point for substrate; the sequence is FY. Residues 165 to 168, K192, Y208, N231, 253 to 259, 287 to 289, and N337 contribute to the NADP(+) site; these read GACG, CGQISQY, and FLV. A substrate-binding site is contributed by 288 to 290; it reads LVL.

It belongs to the NADP-dependent oxidoreductase L4BD family. Monomer. In terms of tissue distribution, widely expressed.

The protein resides in the cytoplasm. The enzyme catalyses 13,14-dihydro-15-oxo-prostaglandin E2 + NAD(+) = 15-oxoprostaglandin E2 + NADH + H(+). It catalyses the reaction 13,14-dihydro-15-oxo-prostaglandin E2 + NADP(+) = 15-oxoprostaglandin E2 + NADPH + H(+). The catalysed reaction is 13,14-dihydro-15-oxo-PGF2alpha + NADP(+) = 15-oxoprostaglandin F2alpha + NADPH + H(+). It carries out the reaction 13,14-dihydro-15-oxo-prostaglandin E1 + NADP(+) = 15-oxoprostaglandin E1 + NADPH + H(+). The enzyme catalyses 13,14-dihydro-15-oxo-prostaglandin F1alpha + NADP(+) = 15-oxoprostaglandin F1alpha + NADPH + H(+). Its function is as follows. Functions as 15-oxo-prostaglandin 13-reductase and acts on 15-keto-PGE1, 15-keto-PGE2, 15-keto-PGE1-alpha and 15-keto-PGE2-alpha with highest activity towards 15-keto-PGE2. Overexpression represses transcriptional activity of PPARG and inhibits adipocyte differentiation. The polypeptide is Prostaglandin reductase 2 (Homo sapiens (Human)).